The chain runs to 202 residues: Imidazoleglycerol-phosphate dehydratase (202 aa).

This sequence belongs to the imidazoleglycerol-phosphate dehydratase family.

It is found in the cytoplasm. The catalysed reaction is D-erythro-1-(imidazol-4-yl)glycerol 3-phosphate = 3-(imidazol-4-yl)-2-oxopropyl phosphate + H2O. It functions in the pathway amino-acid biosynthesis; L-histidine biosynthesis; L-histidine from 5-phospho-alpha-D-ribose 1-diphosphate: step 6/9. The chain is Imidazoleglycerol-phosphate dehydratase from Clavibacter michiganensis subsp. michiganensis (strain NCPPB 382).